The chain runs to 156 residues: Deoxyuridine 5'-triphosphate nucleotidohydrolase (156 aa).

Belongs to the dCTP deaminase family. Archaeal dUTPase subfamily. Homotrimer.

It catalyses the reaction dUTP + H2O = dUMP + diphosphate + H(+). The protein operates within pyrimidine metabolism; dUMP biosynthesis; dUMP from dCTP (dUTP route): step 2/2. This enzyme is involved in nucleotide metabolism: it produces dUMP, the immediate precursor of thymidine nucleotides and it decreases the intracellular concentration of dUTP so that uracil cannot be incorporated into DNA. This chain is Deoxyuridine 5'-triphosphate nucleotidohydrolase, found in Methanocaldococcus jannaschii (strain ATCC 43067 / DSM 2661 / JAL-1 / JCM 10045 / NBRC 100440) (Methanococcus jannaschii).